The sequence spans 244 residues: uncharacterized protein (244 aa).

An HTH gntR-type domain is found at 12–80 (VALWRQIADR…QGRGTMIERK (69 aa)). Positions 40-59 (ETALAAEFGVNRHTVRSALA) form a DNA-binding region, H-T-H motif.

This is an uncharacterized protein from Rhizobium meliloti (strain 1021) (Ensifer meliloti).